A 164-amino-acid polypeptide reads, in one-letter code: C-type natriuretic peptide (164 aa).

An N-terminal signal peptide occupies residues 1–23 (MVASRLAAGGLLLLALLALALDG). 2 disordered regions span residues 24-93 (KPAP…AAAA) and 115-134 (HPEH…GASR). The propeptide occupies 24-142 (KPAPPQPLRK…SRRLKGVAKK (119 aa)). Over residues 58 to 67 (AGGGGGGGRS) the composition is skewed to gly residues. Residues 68–93 (GSKAANAAPTAPKSKGGAAAAAAAAA) show a composition bias toward low complexity. Residues 121–132 (GGGGGGGGGGGA) show a composition bias toward gly residues. A disulfide bridge links cysteine 148 with cysteine 164.

This sequence belongs to the natriuretic peptide family. Expressed by the venom gland.

It is found in the secreted. Its function is as follows. Snake venom natriuretic peptide that has a vasorelaxant activity in rat aortic strips and a diuretic potency in anesthetized rats. May act by activating natriuretic receptors (NPR1 and/or NPR2). The sequence is that of C-type natriuretic peptide from Philodryas olfersii (Green snake).